The primary structure comprises 626 residues: UPF0313 protein MM_1287 (626 aa).

The interval 206–227 (GKGKEKAGEQDESENATEEVAK) is disordered. A Radical SAM core domain is found at 320 to 589 (ALEMVKFSLT…AMQRALMHYR (270 aa)). 3 residues coordinate [4Fe-4S] cluster: C334, C338, and C341.

This sequence belongs to the UPF0313 family. It depends on [4Fe-4S] cluster as a cofactor.

This is UPF0313 protein MM_1287 from Methanosarcina mazei (strain ATCC BAA-159 / DSM 3647 / Goe1 / Go1 / JCM 11833 / OCM 88) (Methanosarcina frisia).